A 153-amino-acid chain; its full sequence is 3-hydroxyacyl-[acyl-carrier-protein] dehydratase FabZ (153 aa).

The active site involves His47.

This sequence belongs to the thioester dehydratase family. FabZ subfamily.

It is found in the cytoplasm. It carries out the reaction a (3R)-hydroxyacyl-[ACP] = a (2E)-enoyl-[ACP] + H2O. Involved in unsaturated fatty acids biosynthesis. Catalyzes the dehydration of short chain beta-hydroxyacyl-ACPs and long chain saturated and unsaturated beta-hydroxyacyl-ACPs. The chain is 3-hydroxyacyl-[acyl-carrier-protein] dehydratase FabZ from Dichelobacter nodosus (strain VCS1703A).